A 439-amino-acid polypeptide reads, in one-letter code: C4-dicarboxylate transport protein (439 aa).

Transmembrane regions (helical) follow at residues histidine 9–proline 29, methionine 45–methionine 65, leucine 80–isoleucine 100, glycine 150–glycine 170, alanine 186–methionine 206, leucine 221–glycine 241, valine 291–leucine 311, isoleucine 334–valine 354, and alanine 357–isoleucine 377.

The protein belongs to the dicarboxylate/amino acid:cation symporter (DAACS) (TC 2.A.23) family.

Its subcellular location is the cell inner membrane. Responsible for the transport of dicarboxylates such as succinate, fumarate, and malate from the periplasm across the membrane. In Geobacter sp. (strain M21), this protein is C4-dicarboxylate transport protein.